The chain runs to 793 residues: Cation channel sperm-associated auxiliary subunit delta (793 aa).

Residues 1–20 (MLMLMLVAAVTMWLRPLVTA) form the signal peptide. Residues 21–725 (QPLCRARTVR…AFPVQLVSAG (705 aa)) are Extracellular-facing. 7 cysteine pairs are disulfide-bonded: Cys-24–Cys-370, Cys-60–Cys-146, Cys-145–Cys-153, Cys-388–Cys-497, Cys-511–Cys-703, Cys-526–Cys-573, and Cys-625–Cys-653. An N-linked (GlcNAc...) asparagine glycan is attached at Asn-128. Residues Asn-231, Asn-241, Asn-473, Asn-539, and Asn-631 are each glycosylated (N-linked (GlcNAc...) asparagine). A helical transmembrane segment spans residues 726 to 747 (VVMVLLISSILGSVWLAYMIPR). Over 748 to 793 (LLRTARGRRMTSFVAQLYGRCKTVCQFRASATARTGSKPMGRHRSS) the chain is Cytoplasmic.

It belongs to the CATSPERD family. Component of the CatSper complex or CatSpermasome composed of the core pore-forming members CATSPER1, CATSPER2, CATSPER3 and CATSPER4 as well as auxiliary members CATSPERB, CATSPERG, CATSPERD, CATSPERE, CATSPERZ, C2CD6/CATSPERT, TMEM249, TMEM262 and EFCAB9. HSPA1 may be an additional auxiliary complex member. The core complex members CATSPER1, CATSPER2, CATSPER3 and CATSPER4 form a heterotetrameric channel. The auxiliary CATSPERB, CATSPERG, CATSPERD and CATSPERE subunits form a pavilion-like structure over the pore which stabilizes the complex through interactions with CATSPER4, CATSPER3, CATSPER1 and CATSPER2 respectively. TMEM262/CATSPERH interacts with CATSPERB, further stabilizing the complex. C2CD6/CATSPERT interacts at least with CATSPERD and is required for targeting the CatSper complex in the flagellar membrane.

The protein resides in the cell projection. Its subcellular location is the cilium. The protein localises to the flagellum membrane. Its function is as follows. Auxiliary component of the CatSper complex, a complex involved in sperm cell hyperactivation. Sperm cell hyperactivation is needed for sperm motility which is essential late in the preparation of sperm for fertilization. Required for CATSPER1 stability before intraflagellar transport and/or incorporation of the CatSper complex channel into the flagellar membrane. The sequence is that of Cation channel sperm-associated auxiliary subunit delta from Macaca fascicularis (Crab-eating macaque).